The sequence spans 361 residues: Cysteine-rich with EGF-like domain protein 2-B (361 aa).

An N-terminal signal peptide occupies residues 1–24 (MNGSRAWRLAAWLLLCLSCSAAVA). The EGF-like 1 domain occupies 134 to 176 (DCLACLGGSERPCHGNGFCSGDGTRSGDGSCRCKAEYTGSFCL). Cystine bridges form between Cys138–Cys152, Cys146–Cys164, and Cys166–Cys175. A glycan (N-linked (GlcNAc...) asparagine) is linked at Asn188. FU repeat units lie at residues 191–238 (HAVC…EESP) and 251–298 (SFLC…SEKL). The EGF-like 2; calcium-binding domain maps to 288–329 (DVDECDASEKLCLRENEVCLNTAGSYKCTCSEGFEDKEGNCV). Intrachain disulfides connect Cys292-Cys306, Cys299-Cys315, and Cys317-Cys328. The tract at residues 339-361 (ITEGETGTPASDTNILNTAHEDL) is disordered. Positions 346–355 (TPASDTNILN) are enriched in polar residues.

It belongs to the CRELD family.

The protein localises to the secreted. It is found in the endoplasmic reticulum. Functionally, possible role in neuronal acetylcholine receptor transport. This chain is Cysteine-rich with EGF-like domain protein 2-B (creld2-b), found in Xenopus laevis (African clawed frog).